The sequence spans 633 residues: Phosphomethylpyrimidine synthase (633 aa).

Residues N245, M274, Y303, H339, 359–361 (SRG), 400–403 (DGLR), and E439 contribute to the substrate site. H443 provides a ligand contact to Zn(2+). Residue Y466 coordinates substrate. A Zn(2+)-binding site is contributed by H507. Residues C587, C590, and C595 each coordinate [4Fe-4S] cluster.

This sequence belongs to the ThiC family. Homodimer. Requires [4Fe-4S] cluster as cofactor.

It catalyses the reaction 5-amino-1-(5-phospho-beta-D-ribosyl)imidazole + S-adenosyl-L-methionine = 4-amino-2-methyl-5-(phosphooxymethyl)pyrimidine + CO + 5'-deoxyadenosine + formate + L-methionine + 3 H(+). The protein operates within cofactor biosynthesis; thiamine diphosphate biosynthesis. Its function is as follows. Catalyzes the synthesis of the hydroxymethylpyrimidine phosphate (HMP-P) moiety of thiamine from aminoimidazole ribotide (AIR) in a radical S-adenosyl-L-methionine (SAM)-dependent reaction. The polypeptide is Phosphomethylpyrimidine synthase (Neisseria meningitidis serogroup C / serotype 2a (strain ATCC 700532 / DSM 15464 / FAM18)).